The chain runs to 213 residues: Redox-sensing transcriptional repressor Rex (213 aa).

Residues 18 to 57 (LYYRIFKRFHAEKIERANSKQIAEAIGIDSATVRRDFSYF) constitute a DNA-binding region (H-T-H motif). 92–97 (GIGNMG) contacts NAD(+).

It belongs to the transcriptional regulatory Rex family. As to quaternary structure, homodimer.

The protein localises to the cytoplasm. Functionally, modulates transcription in response to changes in cellular NADH/NAD(+) redox state. Binds to the promoter of the aldehyde-alcohol dehydrogenase adhE gene. Functions as a redox-dependent repressor of adhE expression. This chain is Redox-sensing transcriptional repressor Rex, found in Streptococcus pneumoniae (strain ATCC BAA-255 / R6).